Reading from the N-terminus, the 295-residue chain is Putative attaching and effacing protein homolog (295 aa).

The N-terminal stretch at 1–25 (MSHYKTGHKQPRFRYSVLARCVAWA) is a signal peptide.

Belongs to the intimin/invasin family.

The sequence is that of Putative attaching and effacing protein homolog (eaeH) from Escherichia coli (strain K12).